A 924-amino-acid chain; its full sequence is DNA repair and recombination protein RDH54 (924 aa).

Positions 1-10 are enriched in basic and acidic residues; that stretch reads MQIPKYENKP. 2 disordered regions span residues 1 to 21 and 155 to 183; these read MQIP…GSNK and EALS…NDGG. A compositionally biased stretch (low complexity) spans 168–178; it reads TTSTTETVPST. The Helicase ATP-binding domain occupies 299 to 487; the sequence is LENDSDISGC…FTIIDFINPG (189 aa). An ATP-binding site is contributed by 346–353; that stretch reads IPLTGLCK. Residues 472–475 carry the DEGH box motif; the sequence is NDLN. A Glycyl lysine isopeptide (Lys-Gly) (interchain with G-Cter in ubiquitin) cross-link involves residue Lys-615. A Helicase C-terminal domain is found at 631 to 790; sequence KLRVLMTLLE…DSEMRNKESS (160 aa).

It belongs to the SNF2/RAD54 helicase family. As to quaternary structure, interacts with RAD51 and DMC1.

The protein resides in the nucleus. It carries out the reaction ATP + H2O = ADP + phosphate + H(+). Involved in the recombinational repair of double-strand breaks (DSB) in DNA during mitosis and meiosis. Has DNA dependent ATPase activity. Promotes D-loop (displacement loop) formation with RAD51 recombinase. Modifies the topology of double-stranded DNA during the D-loop reaction to facilitate the invasion of the homologous duplex molecule by the initiating single-stranded DNA substrate. Required for adaptation from G2/M checkpoint arrest induced by a double strand break, by participating in monitoring the extent of single-stranded DNA produced by resection of DNA ends. This role is distinct from its roles in recombination. Promotes colocalization of RAD51 and DMC1 during meiotic recombination. Involved in crossover interference. In Saccharomyces cerevisiae (strain YJM789) (Baker's yeast), this protein is DNA repair and recombination protein RDH54 (RDH54).